The following is a 282-amino-acid chain: N-acetylaspartate synthetase (282 aa).

Residues 103–125 (FLTVMCYVMTKSFTLTFCAPFIL) form a helical membrane-spanning segment. The region spanning 110–269 (VMTKSFTLTF…RSPLERLFFQ (160 aa)) is the N-acetyltransferase domain.

It belongs to the NAT8 family.

It localises to the cytoplasm. The protein resides in the microsome membrane. Its subcellular location is the mitochondrion membrane. The protein localises to the endoplasmic reticulum membrane. The enzyme catalyses L-aspartate + acetyl-CoA = N-acetyl-L-aspartate + CoA + H(+). In terms of biological role, catalyzes the synthesis of N-acetylaspartate acid (NAA) from L-aspartate and acetyl-CoA. In Danio rerio (Zebrafish), this protein is N-acetylaspartate synthetase (nat8l).